Consider the following 319-residue polypeptide: Beta-ketoacyl-[acyl-carrier-protein] synthase III (319 aa).

Residues cysteine 115 and histidine 246 contribute to the active site. Residues 247–251 form an ACP-binding region; sequence QANLR. The active site involves asparagine 276.

The protein belongs to the thiolase-like superfamily. FabH family. As to quaternary structure, homodimer.

The protein localises to the cytoplasm. It catalyses the reaction malonyl-[ACP] + acetyl-CoA + H(+) = 3-oxobutanoyl-[ACP] + CO2 + CoA. Its pathway is lipid metabolism; fatty acid biosynthesis. Its function is as follows. Catalyzes the condensation reaction of fatty acid synthesis by the addition to an acyl acceptor of two carbons from malonyl-ACP. Catalyzes the first condensation reaction which initiates fatty acid synthesis and may therefore play a role in governing the total rate of fatty acid production. Possesses both acetoacetyl-ACP synthase and acetyl transacylase activities. Its substrate specificity determines the biosynthesis of branched-chain and/or straight-chain of fatty acids. The chain is Beta-ketoacyl-[acyl-carrier-protein] synthase III from Coxiella burnetii (strain CbuK_Q154) (Coxiella burnetii (strain Q154)).